We begin with the raw amino-acid sequence, 673 residues long: DNA ligase (673 aa).

Residues 34–38, 83–84, and E116 each bind NAD(+); these read DAEYD and SL. The active-site N6-AMP-lysine intermediate is K118. The NAD(+) site is built by R139, E176, K293, and K317. Zn(2+)-binding residues include C411, C414, C429, and C435. The 79-residue stretch at 595 to 673 folds into the BRCT domain; the sequence is NQQNPFFGKT…EDEFLKWVNS (79 aa).

Belongs to the NAD-dependent DNA ligase family. LigA subfamily. Mg(2+) serves as cofactor. Mn(2+) is required as a cofactor.

The enzyme catalyses NAD(+) + (deoxyribonucleotide)n-3'-hydroxyl + 5'-phospho-(deoxyribonucleotide)m = (deoxyribonucleotide)n+m + AMP + beta-nicotinamide D-nucleotide.. DNA ligase that catalyzes the formation of phosphodiester linkages between 5'-phosphoryl and 3'-hydroxyl groups in double-stranded DNA using NAD as a coenzyme and as the energy source for the reaction. It is essential for DNA replication and repair of damaged DNA. This is DNA ligase from Legionella pneumophila (strain Corby).